The chain runs to 365 residues: MSRPVPNPGILDIAPYTPGKSPAPEAGRKVFKLSANETPFGPSPKAMDAYRDAVAHLEDYPEGTSRVLRAAIGRAYGLDPDRIICGAGSDEILNLLAHTFLSHGDEAISTTHAFLVYPIATMANGATNIVAPETGYTADIDAILERVTPKTKMVWLANPNNPTGTYLPFDEIRRLRAGLPPHVLLVLDGAYSDYVSRNDYEFGIELVATTENTVLTHTFSKIHGLAALRIGWMFGPAHIVDAMNRIRGPFNVSTPAMLAAAAAIEDTAHVQMTRMHTEKWRSWLTDELTNLGLKVTPSVTNFILIHFPDARGRTASEADAFLTRRGLVLRALDNYCLPNALRMTIGTEEANRLVADGLRDFMART.

The interval 1–22 is disordered; the sequence is MSRPVPNPGILDIAPYTPGKSP. Lys221 carries the N6-(pyridoxal phosphate)lysine modification.

The protein belongs to the class-II pyridoxal-phosphate-dependent aminotransferase family. Histidinol-phosphate aminotransferase subfamily. As to quaternary structure, homodimer. Requires pyridoxal 5'-phosphate as cofactor.

It catalyses the reaction L-histidinol phosphate + 2-oxoglutarate = 3-(imidazol-4-yl)-2-oxopropyl phosphate + L-glutamate. It participates in amino-acid biosynthesis; L-histidine biosynthesis; L-histidine from 5-phospho-alpha-D-ribose 1-diphosphate: step 7/9. In Nitrobacter winogradskyi (strain ATCC 25391 / DSM 10237 / CIP 104748 / NCIMB 11846 / Nb-255), this protein is Histidinol-phosphate aminotransferase.